Here is a 421-residue protein sequence, read N- to C-terminus: Probable acid phosphatase (421 aa).

The active-site Proton donor is Asp229.

The catalysed reaction is a phosphate monoester + H2O = an alcohol + phosphate. In Kluyveromyces lactis (strain ATCC 8585 / CBS 2359 / DSM 70799 / NBRC 1267 / NRRL Y-1140 / WM37) (Yeast), this protein is Probable acid phosphatase.